The chain runs to 557 residues: Potassium-transporting ATPase potassium-binding subunit (557 aa).

Transmembrane regions (helical) follow at residues 1 to 21 (MEILQIAIILIVFVLLCIPIG), 62 to 82 (QYIFALLMCNAVPAIIGYIIL), 132 to 152 (IVITFFMFFAAATGIAVALAF), 176 to 196 (ILLPLSIIVAIFYIGQGVPQT), 253 to 273 (VQIITLLLLAGSMVVCFGHMI), 279 to 299 (AVAIFAAMMVLLLAGAAICFS), 371 to 391 (IFGGVGVGFMNMIMYAILTVF), 415 to 435 (LVAFAIIVHPFLILMSSALAL), 482 to 502 (VSAGVVMFLGRYLSIIILLAV), and 528 to 548 (VTLIVIIVIIGALTFLPAVAL).

It belongs to the KdpA family. As to quaternary structure, the system is composed of three essential subunits: KdpA, KdpB and KdpC.

It is found in the cell membrane. Functionally, part of the high-affinity ATP-driven potassium transport (or Kdp) system, which catalyzes the hydrolysis of ATP coupled with the electrogenic transport of potassium into the cytoplasm. This subunit binds the extracellular potassium ions and delivers the ions to the membrane domain of KdpB through an intramembrane tunnel. This Clostridium acetobutylicum (strain ATCC 824 / DSM 792 / JCM 1419 / IAM 19013 / LMG 5710 / NBRC 13948 / NRRL B-527 / VKM B-1787 / 2291 / W) protein is Potassium-transporting ATPase potassium-binding subunit.